Here is a 367-residue protein sequence, read N- to C-terminus: sn-glycerol-3-phosphate import ATP-binding protein UgpC (367 aa).

In terms of domain architecture, ABC transporter spans 4-235 (LSLRNVQKTY…PASTFVAGFI (232 aa)). ATP is bound at residue 37 to 44 (GPSGCGKS).

Belongs to the ABC transporter superfamily. sn-glycerol-3-phosphate importer (TC 3.A.1.1.3) family. In terms of assembly, the complex is composed of two ATP-binding proteins (UgpC), two transmembrane proteins (UgpA and UgpE) and a solute-binding protein (UgpB).

The protein resides in the cell inner membrane. The enzyme catalyses sn-glycerol 3-phosphate(out) + ATP + H2O = sn-glycerol 3-phosphate(in) + ADP + phosphate + H(+). Its function is as follows. Part of the ABC transporter complex UgpBAEC involved in sn-glycerol-3-phosphate (G3P) import. Responsible for energy coupling to the transport system. In Cupriavidus metallidurans (strain ATCC 43123 / DSM 2839 / NBRC 102507 / CH34) (Ralstonia metallidurans), this protein is sn-glycerol-3-phosphate import ATP-binding protein UgpC.